The sequence spans 37 residues: Large ribosomal subunit protein bL36 (37 aa).

It belongs to the bacterial ribosomal protein bL36 family.

This Mycobacterium ulcerans (strain Agy99) protein is Large ribosomal subunit protein bL36.